The following is a 117-amino-acid chain: Protein RALF-like 32 (117 aa).

An N-terminal signal peptide occupies residues 1-26 (MEIKPSRIFSTITIFFLCLLLAHVTS). The propeptide at 27–64 (KASSSSLCNGSVAECSSMVETEEMSVIMESWSSQRLTE) is removed in mature form. N-linked (GlcNAc...) asparagine glycosylation occurs at Asn35. The segment at 77–107 (RNQPACDGGKRGESYSTQCLPPPSNPYSRGC) is disordered. 2 disulfides stabilise this stretch: Cys82–Cys95 and Cys107–Cys113.

The protein belongs to the plant rapid alkalinization factor (RALF) family. In terms of processing, proteolytically cleaved, probably by S1P, a subtilisin-like serine protease (subtilase).

The protein resides in the secreted. Functionally, cell signaling peptide that may regulate plant stress, growth, and development. Mediates a rapid alkalinization of extracellular space by mediating a transient increase in the cytoplasmic Ca(2+) concentration leading to a calcium-dependent signaling events through a cell surface receptor and a concomitant activation of some intracellular mitogen-activated protein kinases. This Arabidopsis thaliana (Mouse-ear cress) protein is Protein RALF-like 32 (RALFL32).